The chain runs to 88 residues: Cell division topological specificity factor (88 aa).

Belongs to the MinE family.

Prevents the cell division inhibition by proteins MinC and MinD at internal division sites while permitting inhibition at polar sites. This ensures cell division at the proper site by restricting the formation of a division septum at the midpoint of the long axis of the cell. In Salmonella agona (strain SL483), this protein is Cell division topological specificity factor.